The following is a 253-amino-acid chain: Tetraspanin-11 (253 aa).

Transmembrane regions (helical) follow at residues 19–39 (LLFIFNFFFWVGGAAVMAVGI), 63–83 (VLIFVGGLVMTTGFLGFGAII), 93–113 (YFCLLLAIFLVELVAGVLAHV), and 220–240 (LLLMGAVGIGVACLQICGMVL).

Belongs to the tetraspanin (TM4SF) family.

Its subcellular location is the membrane. This Rattus norvegicus (Rat) protein is Tetraspanin-11 (Tspan11).